Here is a 131-residue protein sequence, read N- to C-terminus: Large ribosomal subunit protein bL19 (131 aa).

Residues 107–131 (GKSARIAERAERGSDKGKAAPAAAE) are disordered. Residues 111-124 (RIAERAERGSDKGK) show a composition bias toward basic and acidic residues.

This sequence belongs to the bacterial ribosomal protein bL19 family.

Functionally, this protein is located at the 30S-50S ribosomal subunit interface and may play a role in the structure and function of the aminoacyl-tRNA binding site. The chain is Large ribosomal subunit protein bL19 from Methylobacterium sp. (strain 4-46).